Reading from the N-terminus, the 70-residue chain is DNA-directed RNA polymerase subunit omega (70 aa).

Belongs to the RNA polymerase subunit omega family. In terms of assembly, the RNAP catalytic core consists of 2 alpha, 1 beta, 1 beta' and 1 omega subunit. When a sigma factor is associated with the core the holoenzyme is formed, which can initiate transcription.

It carries out the reaction RNA(n) + a ribonucleoside 5'-triphosphate = RNA(n+1) + diphosphate. In terms of biological role, promotes RNA polymerase assembly. Latches the N- and C-terminal regions of the beta' subunit thereby facilitating its interaction with the beta and alpha subunits. The chain is DNA-directed RNA polymerase subunit omega from Caldanaerobacter subterraneus subsp. tengcongensis (strain DSM 15242 / JCM 11007 / NBRC 100824 / MB4) (Thermoanaerobacter tengcongensis).